Here is a 682-residue protein sequence, read N- to C-terminus: DNA ligase (682 aa).

Residues 38–42 (DAEYD), 87–88 (SI), and Glu-119 contribute to the NAD(+) site. The active-site N6-AMP-lysine intermediate is Lys-121. Residues Arg-142, Glu-181, Lys-298, and Lys-322 each coordinate NAD(+). Cys-416, Cys-419, Cys-434, and Cys-439 together coordinate Zn(2+). Residues 601–682 (GHEMPLAGKT…LLSLLEPGER (82 aa)) enclose the BRCT domain.

The protein belongs to the NAD-dependent DNA ligase family. LigA subfamily. It depends on Mg(2+) as a cofactor. Mn(2+) is required as a cofactor.

It catalyses the reaction NAD(+) + (deoxyribonucleotide)n-3'-hydroxyl + 5'-phospho-(deoxyribonucleotide)m = (deoxyribonucleotide)n+m + AMP + beta-nicotinamide D-nucleotide.. DNA ligase that catalyzes the formation of phosphodiester linkages between 5'-phosphoryl and 3'-hydroxyl groups in double-stranded DNA using NAD as a coenzyme and as the energy source for the reaction. It is essential for DNA replication and repair of damaged DNA. The sequence is that of DNA ligase from Desulfosudis oleivorans (strain DSM 6200 / JCM 39069 / Hxd3) (Desulfococcus oleovorans).